The primary structure comprises 130 residues: Follitropin subunit beta (130 aa).

Positions 1–20 are cleaved as a signal peptide; sequence MMKLIQLCILFWCWRAICCH. Disulfide bonds link Cys-22/Cys-70, Cys-36/Cys-85, Cys-39/Cys-123, Cys-47/Cys-101, Cys-51/Cys-103, and Cys-106/Cys-113. Residues Asn-26 and Asn-43 are each glycosylated (N-linked (GlcNAc...) asparagine).

This sequence belongs to the glycoprotein hormones subunit beta family. Heterodimer. The active follitropin is a heterodimer composed of an alpha chain/CGA shared with other hormones and a unique beta chain/FSHB shown here.

The protein resides in the secreted. Functionally, together with the alpha chain CGA constitutes follitropin, the follicle-stimulating hormone, and provides its biological specificity to the hormone heterodimer. Binds FSHR, a G protein-coupled receptor, on target cells to activate downstream signaling pathways. Follitropin is involved in follicle development and spermatogenesis in reproductive organs. The polypeptide is Follitropin subunit beta (Fshb) (Mus musculus (Mouse)).